The primary structure comprises 299 residues: Phosphoribosylaminoimidazole-succinocarboxamide synthase (299 aa).

Belongs to the SAICAR synthetase family.

The catalysed reaction is 5-amino-1-(5-phospho-D-ribosyl)imidazole-4-carboxylate + L-aspartate + ATP = (2S)-2-[5-amino-1-(5-phospho-beta-D-ribosyl)imidazole-4-carboxamido]succinate + ADP + phosphate + 2 H(+). It functions in the pathway purine metabolism; IMP biosynthesis via de novo pathway; 5-amino-1-(5-phospho-D-ribosyl)imidazole-4-carboxamide from 5-amino-1-(5-phospho-D-ribosyl)imidazole-4-carboxylate: step 1/2. This is Phosphoribosylaminoimidazole-succinocarboxamide synthase from Leifsonia xyli subsp. xyli (strain CTCB07).